A 145-amino-acid chain; its full sequence is 3-hydroxyacyl-[acyl-carrier-protein] dehydratase FabZ (145 aa).

His49 is an active-site residue.

Belongs to the thioester dehydratase family. FabZ subfamily.

It is found in the cytoplasm. The catalysed reaction is a (3R)-hydroxyacyl-[ACP] = a (2E)-enoyl-[ACP] + H2O. Functionally, involved in unsaturated fatty acids biosynthesis. Catalyzes the dehydration of short chain beta-hydroxyacyl-ACPs and long chain saturated and unsaturated beta-hydroxyacyl-ACPs. The polypeptide is 3-hydroxyacyl-[acyl-carrier-protein] dehydratase FabZ (Rickettsia akari (strain Hartford)).